The primary structure comprises 504 residues: Maturase K (504 aa).

It belongs to the intron maturase 2 family. MatK subfamily.

It is found in the plastid. Its subcellular location is the chloroplast. Its function is as follows. Usually encoded in the trnK tRNA gene intron. Probably assists in splicing its own and other chloroplast group II introns. The protein is Maturase K of Cucumis sativus (Cucumber).